The following is a 321-amino-acid chain: Cytochrome c biogenesis protein CcsA (321 aa).

Helical transmembrane passes span 17-37 (IISI…IVGI), 43-63 (KGII…WIYS), 143-163 (MLLS…FLVI), 225-245 (VISL…VWAN), 258-275 (ETWA…LHTR), and 287-307 (IVAS…NLLG).

It belongs to the CcmF/CycK/Ccl1/NrfE/CcsA family. In terms of assembly, may interact with Ccs1.

The protein localises to the plastid. Its subcellular location is the chloroplast thylakoid membrane. Functionally, required during biogenesis of c-type cytochromes (cytochrome c6 and cytochrome f) at the step of heme attachment. This chain is Cytochrome c biogenesis protein CcsA, found in Drimys granadensis.